We begin with the raw amino-acid sequence, 588 residues long: Calcium/calmodulin-dependent protein kinase kinase 2 (588 aa).

A compositionally biased stretch (polar residues) spans 1 to 14 (MSSCVSSQPSSNRA). 2 disordered regions span residues 1–33 (MSSC…SQKP) and 78–100 (GQEV…RKLS). Serine 2 carries the N-acetylserine modification. Residues serine 100, serine 114, serine 129, serine 133, and serine 137 each carry the phosphoserine modification. Residues 128 to 139 (YSPVSSPQSSPR) show a composition bias toward low complexity. The segment at 128–149 (YSPVSSPQSSPRLPRRPTVESH) is disordered. In terms of domain architecture, Protein kinase spans 165 to 446 (YTLKDEIGKG…VPEIKLHPWV (282 aa)). ATP contacts are provided by residues 171 to 179 (IGKGSYGVV) and lysine 194. An RP domain region spans residues 204–226 (QAGFPRRPPPRGTRPAPGGCIQP). The tract at residues 205 to 225 (AGFPRRPPPRGTRPAPGGCIQ) is disordered. Aspartate 312 (proton acceptor) is an active-site residue. Positions 472-477 (ENSVKH) are autoinhibitory domain. The segment at 475–500 (VKHIPSLATVILVKTMIRKRSFGNPF) is calmodulin-binding. A phosphoserine mark is found at proline 479, serine 495, serine 511, threonine 522, and serine 572. Residues 497–588 (GNPFEGSRRE…LRPEEAMEPE (92 aa)) are disordered. Residues 521–536 (PTRECESLSELKEARQ) are compositionally biased toward basic and acidic residues. Basic and acidic residues predominate over residues 579-588 (LRPEEAMEPE).

The protein belongs to the protein kinase superfamily. Ser/Thr protein kinase family. As to quaternary structure, interacts with calmodulin. Autophosphorylated and phosphorylated by PKA. Each isoform may show a different pattern of phosphorylation. As to expression, ubiquitously expressed with higher levels in the brain. Intermediate levels are detected in spleen, prostate, thyroid and leukocytes. The lowest level is in lung.

It is found in the nucleus. The protein resides in the cytoplasm. It localises to the cell projection. Its subcellular location is the neuron projection. The enzyme catalyses L-seryl-[protein] + ATP = O-phospho-L-seryl-[protein] + ADP + H(+). The catalysed reaction is L-threonyl-[protein] + ATP = O-phospho-L-threonyl-[protein] + ADP + H(+). Its activity is regulated as follows. Activated by Ca(2+)/calmodulin. Binding of calmodulin may relieve intrasteric autoinhibition. Autophosphorylation does not alter activity or regulation by Ca(2+)/calmodulin. In part, activity is independent on Ca(2+)/calmodulin. Its function is as follows. Calcium/calmodulin-dependent protein kinase belonging to a proposed calcium-triggered signaling cascade involved in a number of cellular processes. Isoform 1, isoform 2 and isoform 3 phosphorylate CAMK1 and CAMK4. Isoform 3 phosphorylates CAMK1D. Isoform 4, isoform 5 and isoform 6 lacking part of the calmodulin-binding domain are inactive. Efficiently phosphorylates 5'-AMP-activated protein kinase (AMPK) trimer, including that consisting of PRKAA1, PRKAB1 and PRKAG1. This phosphorylation is stimulated in response to Ca(2+) signals. Seems to be involved in hippocampal activation of CREB1. May play a role in neurite growth. Isoform 3 may promote neurite elongation, while isoform 1 may promoter neurite branching. The polypeptide is Calcium/calmodulin-dependent protein kinase kinase 2 (CAMKK2) (Homo sapiens (Human)).